The following is a 355-amino-acid chain: Phosphate acyltransferase (355 aa).

This sequence belongs to the PlsX family. Homodimer. Probably interacts with PlsY.

It is found in the cytoplasm. It catalyses the reaction a fatty acyl-[ACP] + phosphate = an acyl phosphate + holo-[ACP]. It participates in lipid metabolism; phospholipid metabolism. Functionally, catalyzes the reversible formation of acyl-phosphate (acyl-PO(4)) from acyl-[acyl-carrier-protein] (acyl-ACP). This enzyme utilizes acyl-ACP as fatty acyl donor, but not acyl-CoA. This Rhodospirillum centenum (strain ATCC 51521 / SW) protein is Phosphate acyltransferase.